The following is a 541-amino-acid chain: ATP synthase subunit alpha (541 aa).

173–180 (GDRQTGKT) is a binding site for ATP. Residues 517–527 (GIEPGVEEHES) show a composition bias toward basic and acidic residues. Residues 517 to 541 (GIEPGVEEHESLGATAVNQETIVKK) form a disordered region. The segment covering 532 to 541 (AVNQETIVKK) has biased composition (polar residues).

The protein belongs to the ATPase alpha/beta chains family. In terms of assembly, F-type ATPases have 2 components, CF(1) - the catalytic core - and CF(0) - the membrane proton channel. CF(1) has five subunits: alpha(3), beta(3), gamma(1), delta(1), epsilon(1). CF(0) has three main subunits: a(1), b(2) and c(9-12). The alpha and beta chains form an alternating ring which encloses part of the gamma chain. CF(1) is attached to CF(0) by a central stalk formed by the gamma and epsilon chains, while a peripheral stalk is formed by the delta and b chains.

It is found in the cell membrane. The catalysed reaction is ATP + H2O + 4 H(+)(in) = ADP + phosphate + 5 H(+)(out). In terms of biological role, produces ATP from ADP in the presence of a proton gradient across the membrane. The alpha chain is a regulatory subunit. The sequence is that of ATP synthase subunit alpha from Kocuria rhizophila (strain ATCC 9341 / DSM 348 / NBRC 103217 / DC2201).